The sequence spans 123 residues: Large ribosomal subunit protein bL19 (123 aa).

Belongs to the bacterial ribosomal protein bL19 family.

Its function is as follows. This protein is located at the 30S-50S ribosomal subunit interface and may play a role in the structure and function of the aminoacyl-tRNA binding site. The protein is Large ribosomal subunit protein bL19 of Ureaplasma urealyticum serovar 10 (strain ATCC 33699 / Western).